The primary structure comprises 99 residues: Large ribosomal subunit protein uL23cz/uL23cy (99 aa).

The interval 1 to 37 (MGGVENPVSTDKAIRLPERKQYSSNAEPNPSKTEVKR) is disordered. The span at 12 to 21 (KAIRLPERKQ) shows a compositional bias: basic and acidic residues. A compositionally biased stretch (polar residues) spans 22-32 (YSSNAEPNPSK).

The protein belongs to the universal ribosomal protein uL23 family. In terms of assembly, part of the 50S ribosomal subunit.

It is found in the plastid. It localises to the chloroplast. In terms of biological role, binds to 23S rRNA. In Selaginella uncinata (Blue spike-moss), this protein is Large ribosomal subunit protein uL23cz/uL23cy (rpl23-A).